An 82-amino-acid chain; its full sequence is Small ribosomal subunit protein bS18 (82 aa).

This sequence belongs to the bacterial ribosomal protein bS18 family. As to quaternary structure, part of the 30S ribosomal subunit. Forms a tight heterodimer with protein bS6.

In terms of biological role, binds as a heterodimer with protein bS6 to the central domain of the 16S rRNA, where it helps stabilize the platform of the 30S subunit. The sequence is that of Small ribosomal subunit protein bS18 from Bifidobacterium longum (strain NCC 2705).